An 805-amino-acid polypeptide reads, in one-letter code: RFX-like transcription factor daf-19 (805 aa).

Residues Met-1–Leu-14 show a composition bias toward polar residues. Residues Met-1–Asp-113 form a disordered region. A compositionally biased stretch (basic and acidic residues) spans Lys-19–His-92. Polar residues predominate over residues Asn-93–Thr-104. The segment at residues Thr-260–Asp-334 is a DNA-binding region (RFX-type winged-helix).

This sequence belongs to the RFX family. Ciliated sensory neurons. As to expression, expressed in the male tail HOB and RnB neurons but not in male-specific CEM head neurons or other ciliated neurons.

The protein resides in the nucleus. Its function is as follows. Probable transcription factor. May regulate some genes of ciliated sensory neurons. May activate the expression of the shared components of sensory cilia, but not the cell-type-specific expression. Together with transcription factor atf-7, involved in regulation of the serotonergic response of ADF neurons to pathogenic food. Functionally, involved in male mating behavior; may play a role in functional specialization of PKD ciliated sensory neurons. This chain is RFX-like transcription factor daf-19, found in Caenorhabditis elegans.